Reading from the N-terminus, the 248-residue chain is Granulin (248 aa).

This sequence belongs to the polyhedrin family.

Component of the virus occlusion bodies, which are large proteinaceous structures, that protect the virus from the outside environment for extended periods until they are ingested by insect larvae. The polypeptide is Granulin (Cydia pomonella (Codling moth)).